The chain runs to 239 residues: MLSLGVNIDHIATLRQARRTVEPDPVAAAVIAELAGADGITVHLREDRRHIQDRDVRLLRQTVRTHLNLEMAATEEMVAIALEVKPDYVTLVPERREEITTEGGLDVAGQVSRLRDVVGQLQGSGIPVSLFIDPDPTQIAAAAQVGARWVELHTGRYAEASSAAQRQVELDHLEKASQQALQLGLRVNAGHGLTYWNVGPVARIPGMEELNIGHSIISRAVLVGLDRAVREMRQAMGLS.

Asn-7 provides a ligand contact to 3-amino-2-oxopropyl phosphate. 9 to 10 (DH) lines the 1-deoxy-D-xylulose 5-phosphate pocket. A 3-amino-2-oxopropyl phosphate-binding site is contributed by Arg-18. His-43 functions as the Proton acceptor in the catalytic mechanism. Residues Arg-45 and His-50 each coordinate 1-deoxy-D-xylulose 5-phosphate. Catalysis depends on Glu-70, which acts as the Proton acceptor. Thr-100 serves as a coordination point for 1-deoxy-D-xylulose 5-phosphate. His-191 serves as the catalytic Proton donor. 3-amino-2-oxopropyl phosphate is bound by residues Gly-192 and 213-214 (GH).

It belongs to the PNP synthase family. Homooctamer; tetramer of dimers.

The protein resides in the cytoplasm. It catalyses the reaction 3-amino-2-oxopropyl phosphate + 1-deoxy-D-xylulose 5-phosphate = pyridoxine 5'-phosphate + phosphate + 2 H2O + H(+). It participates in cofactor biosynthesis; pyridoxine 5'-phosphate biosynthesis; pyridoxine 5'-phosphate from D-erythrose 4-phosphate: step 5/5. In terms of biological role, catalyzes the complicated ring closure reaction between the two acyclic compounds 1-deoxy-D-xylulose-5-phosphate (DXP) and 3-amino-2-oxopropyl phosphate (1-amino-acetone-3-phosphate or AAP) to form pyridoxine 5'-phosphate (PNP) and inorganic phosphate. The sequence is that of Pyridoxine 5'-phosphate synthase from Synechococcus sp. (strain JA-2-3B'a(2-13)) (Cyanobacteria bacterium Yellowstone B-Prime).